A 187-amino-acid chain; its full sequence is Probable nicotinate-nucleotide adenylyltransferase (187 aa).

It belongs to the NadD family.

It carries out the reaction nicotinate beta-D-ribonucleotide + ATP + H(+) = deamido-NAD(+) + diphosphate. It functions in the pathway cofactor biosynthesis; NAD(+) biosynthesis; deamido-NAD(+) from nicotinate D-ribonucleotide: step 1/1. In terms of biological role, catalyzes the reversible adenylation of nicotinate mononucleotide (NaMN) to nicotinic acid adenine dinucleotide (NaAD). The sequence is that of Probable nicotinate-nucleotide adenylyltransferase from Anaeromyxobacter dehalogenans (strain 2CP-1 / ATCC BAA-258).